The chain runs to 280 residues: Protoheme IX farnesyltransferase 2 (280 aa).

The next 9 helical transmembrane spans lie at 12-32, 35-55, 76-96, 98-118, 129-149, 158-178, 199-221, 226-248, and 255-275; these read VIWLLILASVAGYIYGGGGVD, LFSLLAVAFLSTGGSAAFNHY, LITPNAALAYSLALSATGISL, FLLLGLLPGLFVLLGWLFYAV, WLNIFGGGFAGNAVFLGGYAL, AVLISFAIYLWTPSHIWALAF, ERAVAVISAINAAAAAYILWLYL, GAGGAIVALGVAATIATSIYAAV, and MWKMYKASSPMLTLFLIALMI.

It belongs to the UbiA prenyltransferase family. Protoheme IX farnesyltransferase subfamily.

The protein resides in the cell membrane. The catalysed reaction is heme b + (2E,6E)-farnesyl diphosphate + H2O = Fe(II)-heme o + diphosphate. Its pathway is porphyrin-containing compound metabolism; heme O biosynthesis; heme O from protoheme: step 1/1. Converts heme B (protoheme IX) to heme O by substitution of the vinyl group on carbon 2 of heme B porphyrin ring with a hydroxyethyl farnesyl side group. The chain is Protoheme IX farnesyltransferase 2 from Pyrobaculum aerophilum (strain ATCC 51768 / DSM 7523 / JCM 9630 / CIP 104966 / NBRC 100827 / IM2).